Reading from the N-terminus, the 434-residue chain is MKRNNFSAVNKVVQSSPVVKQPKRGLCSSLRQTHALSVLLDWGTLPHHVILQIFQYLPLIDRARASSVCRRWNEVFHIPDLWRKFEFELNQSATSYFKSTHPDLIQQIIKKHAAHLQYVSFKVDSSTESAEAACDILSQLVNCSIQTLGLISTAKPSFMNVPKSHFVSALTVVFVNSKSLSSIKIEDTPVDDPSLKILVANNSDTLRLLKMSSCPHVSSDGILCVADHCQGLRELALNYYILSDEILLALSSETHVNLEHLRIDVVSENPGQIKFHSIKKRSWDALIKHSPRVNVVMYFFLYEEEFEAFFKEETPVTHLYFGRSVSRAILGRIGLNCPRLIELVVCANGLLPLDSELIRIAKHCKNLTSLGLSECEVSCSAFVEFVRLCGRRLTQLSIMEEVLVPDDRYTPDEVHTEVSKHLGRVWFPDVMPIW.

The region spanning 39 to 85 is the F-box domain; it reads LLDWGTLPHHVILQIFQYLPLIDRARASSVCRRWNEVFHIPDLWRKF. 6 LRR repeats span residues 187–213, 214–239, 242–265, 322–347, 349–374, and 375–400; these read DTPVDDPSLKILVANNSDTLRLLKMSS, CPHVSSDGILCVADHCQGLRELALNY, LSDEILLALSSETHVNLEHLRIDV, GRSVSRAILGRIGLNCPRLIELVVCA, GLLPLDSELIRIAKHCKNLTSLGLSE, and CEVSCSAFVEFVRLCGRRLTQLSIME.

In terms of assembly, part of the SCF (SKP1-CUL1-F-box) E3 ubiquitin-protein ligase complex SCF(FBXL21) composed of CUL1, SKP1, RBX1 and FBXL21. Interacts with CRY1 and CRY2. As to expression, expressed in the hypothalamus, especially in the suprachiasmatic nucleus (SCN). Expression is driven by the core-clock. There is a pronounced diurnal and circadian expression rhythms rising rapidly at the start of the day and declining at the onset of the night.

It localises to the cytoplasm. The protein resides in the cytosol. Its subcellular location is the nucleus. It participates in protein modification; protein ubiquitination. Functionally, substrate-recognition component of the SCF(FBXL21) E3 ubiquitin ligase complex involved in circadian rhythm function. Plays a key role in the maintenance of both the speed and the robustness of the circadian clock oscillation. The SCF(FBXL21) complex mainly acts in the cytosol and mediates ubiquitination of CRY proteins (CRY1 and CRY2), leading to CRY proteins stabilization. The SCF(FBXL21) complex counteracts the activity of the SCF(FBXL3) complex and protects CRY proteins from degradation. Involved in the hypothalamic suprachiasmatic nucleus (SCN) clock regulating temporal organization of the daily activities. In Mus musculus (Mouse), this protein is F-box/LRR-repeat protein 21 (Fbxl21).